Reading from the N-terminus, the 191-residue chain is Fe/S biogenesis protein NfuA (191 aa).

2 residues coordinate [4Fe-4S] cluster: C149 and C152.

This sequence belongs to the NfuA family. As to quaternary structure, homodimer. [4Fe-4S] cluster is required as a cofactor.

In terms of biological role, involved in iron-sulfur cluster biogenesis. Binds a 4Fe-4S cluster, can transfer this cluster to apoproteins, and thereby intervenes in the maturation of Fe/S proteins. Could also act as a scaffold/chaperone for damaged Fe/S proteins. This chain is Fe/S biogenesis protein NfuA, found in Pseudoalteromonas translucida (strain TAC 125).